The following is a 177-amino-acid chain: Large ribosomal subunit protein uL6 (177 aa).

It belongs to the universal ribosomal protein uL6 family. In terms of assembly, part of the 50S ribosomal subunit.

Its function is as follows. This protein binds to the 23S rRNA, and is important in its secondary structure. It is located near the subunit interface in the base of the L7/L12 stalk, and near the tRNA binding site of the peptidyltransferase center. The sequence is that of Large ribosomal subunit protein uL6 from Yersinia enterocolitica serotype O:8 / biotype 1B (strain NCTC 13174 / 8081).